Reading from the N-terminus, the 239-residue chain is ATP-dependent dethiobiotin synthetase BioD (239 aa).

ATP is bound at residue 15 to 20 (EIGKTF). Residue Thr19 participates in Mg(2+) binding. Residue Lys40 is part of the active site. Residues Asp57, 118–121 (EGAG), and 178–179 (NH) contribute to the ATP site. Mg(2+) contacts are provided by Asp57 and Glu118.

The protein belongs to the dethiobiotin synthetase family. In terms of assembly, homodimer. Requires Mg(2+) as cofactor.

It is found in the cytoplasm. It catalyses the reaction (7R,8S)-7,8-diammoniononanoate + CO2 + ATP = (4R,5S)-dethiobiotin + ADP + phosphate + 3 H(+). Its pathway is cofactor biosynthesis; biotin biosynthesis; biotin from 7,8-diaminononanoate: step 1/2. Catalyzes a mechanistically unusual reaction, the ATP-dependent insertion of CO2 between the N7 and N8 nitrogen atoms of 7,8-diaminopelargonic acid (DAPA, also called 7,8-diammoniononanoate) to form a ureido ring. This Burkholderia lata (strain ATCC 17760 / DSM 23089 / LMG 22485 / NCIMB 9086 / R18194 / 383) protein is ATP-dependent dethiobiotin synthetase BioD.